The chain runs to 181 residues: Transmembrane protein 154 (181 aa).

The N-terminal stretch at 1 to 22 (MTVPCAALVLALGLAFGQSSQG) is a signal peptide. A disordered region spans residues 19 to 47 (SSQGNDEESEYSGQSITEEENSEDETTRS). Over 23–74 (NDEESEYSGQSITEEENSEDETTRSALATVTTEALAENVNSTHTNDTSNQVE) the chain is Extracellular. The helical transmembrane segment at 75–95 (FILMVAIPLAALLILLFMVLI) threads the bilayer. Topologically, residues 96 to 181 (ATYFKSKRPK…PNPSPSDNES (86 aa)) are cytoplasmic. The disordered stretch occupies residues 103 to 122 (RPKQEPSSQGSQSALQTHEL). A compositionally biased stretch (polar residues) spans 107–118 (EPSSQGSQSALQ). Y160 is subject to Phosphotyrosine. Residues 161-181 (ECLPTLKEEKEPNPSPSDNES) form a disordered region. S177 carries the post-translational modification Phosphoserine.

It localises to the membrane. The chain is Transmembrane protein 154 (Tmem154) from Mus musculus (Mouse).